Reading from the N-terminus, the 147-residue chain is Protein SPMIP3 (147 aa).

The chain is Protein SPMIP3 from Homo sapiens (Human).